The sequence spans 340 residues: Agmatinase, mitochondrial (340 aa).

The Mn(2+) site is built by histidine 150, aspartate 173, histidine 175, aspartate 177, aspartate 264, and aspartate 266.

This sequence belongs to the arginase family. Agmatinase subfamily. Mn(2+) serves as cofactor.

Its subcellular location is the mitochondrion. It carries out the reaction agmatine + H2O = urea + putrescine. It participates in amine and polyamine biosynthesis; putrescine biosynthesis via agmatine pathway; putrescine from agmatine: step 1/1. The polypeptide is Agmatinase, mitochondrial (AGMAT) (Gallus gallus (Chicken)).